Reading from the N-terminus, the 541-residue chain is Chaperonin GroEL 2 (541 aa).

ATP-binding positions include 29–32 (TLGP), 86–90 (DGTTT), glycine 413, 476–478 (NAA), and aspartate 492.

It belongs to the chaperonin (HSP60) family. In terms of assembly, forms a cylinder of 14 subunits composed of two heptameric rings stacked back-to-back. Interacts with the co-chaperonin GroES.

It localises to the secreted. It is found in the capsule. The protein resides in the cell surface. Its subcellular location is the cell wall. The catalysed reaction is ATP + H2O + a folded polypeptide = ADP + phosphate + an unfolded polypeptide.. Its function is as follows. Together with its co-chaperonin GroES, plays an essential role in assisting protein folding. The GroEL-GroES system forms a nano-cage that allows encapsulation of the non-native substrate proteins and provides a physical environment optimized to promote and accelerate protein folding. The protein is Chaperonin GroEL 2 of Mycobacterium avium (strain 104).